We begin with the raw amino-acid sequence, 284 residues long: 4-diphosphocytidyl-2-C-methyl-D-erythritol kinase (284 aa).

Lysine 14 is a catalytic residue. 98–108 (PMGGGLGGGSS) is an ATP binding site. Aspartate 140 is a catalytic residue.

It belongs to the GHMP kinase family. IspE subfamily.

It carries out the reaction 4-CDP-2-C-methyl-D-erythritol + ATP = 4-CDP-2-C-methyl-D-erythritol 2-phosphate + ADP + H(+). It participates in isoprenoid biosynthesis; isopentenyl diphosphate biosynthesis via DXP pathway; isopentenyl diphosphate from 1-deoxy-D-xylulose 5-phosphate: step 3/6. Catalyzes the phosphorylation of the position 2 hydroxy group of 4-diphosphocytidyl-2C-methyl-D-erythritol. This chain is 4-diphosphocytidyl-2-C-methyl-D-erythritol kinase, found in Shewanella denitrificans (strain OS217 / ATCC BAA-1090 / DSM 15013).